We begin with the raw amino-acid sequence, 193 residues long: Heat shock protein beta-1 (193 aa).

Ser15 and Ser80 each carry phosphoserine. One can recognise a sHSP domain in the interval 74–182; it reads RALSELSSGI…QSSEITIPVT (109 aa).

It belongs to the small heat shock protein (HSP20) family. As to quaternary structure, homooligomer. Homodimer; becomes monomeric upon activation. Heterooligomer. As to expression, smooth, cardiac and skeletal muscle, hardly detectable in fibroblasts or focal contacts.

It is found in the cytoplasm. The protein localises to the nucleus. It localises to the cytoskeleton. The protein resides in the spindle. Small heat shock protein which functions as a molecular chaperone probably maintaining denatured proteins in a folding-competent state. Plays a role in stress resistance and actin organization. The protein is Heat shock protein beta-1 (HSPB1) of Gallus gallus (Chicken).